The following is a 146-amino-acid chain: Transcriptional regulator MraZ (146 aa).

SpoVT-AbrB domains follow at residues 4–46 (SYEK…SKKS) and 75–118 (TIEV…SKEK).

This sequence belongs to the MraZ family. In terms of assembly, forms oligomers.

The protein localises to the cytoplasm. It is found in the nucleoid. This Mycoplasma mobile (strain ATCC 43663 / 163K / NCTC 11711) (Mesomycoplasma mobile) protein is Transcriptional regulator MraZ.